Consider the following 147-residue polypeptide: Acidic phospholipase A2 S3-24 (147 aa).

An N-terminal signal peptide occupies residues 1 to 19; the sequence is MYPAHLLVLLAVCVSLLGA. The propeptide occupies 20-27; sequence SDMPPQPL. 7 disulfide bridges follow: C38-C99, C54-C146, C56-C72, C71-C127, C78-C120, C88-C113, and C106-C118. Y55, G57, and G59 together coordinate Ca(2+). The active site involves H75. D76 is a binding site for Ca(2+). The active site involves D121.

Belongs to the phospholipase A2 family. Group I subfamily. D49 sub-subfamily. The cofactor is Ca(2+). Expressed by the venom gland.

It is found in the secreted. The catalysed reaction is a 1,2-diacyl-sn-glycero-3-phosphocholine + H2O = a 1-acyl-sn-glycero-3-phosphocholine + a fatty acid + H(+). Snake venom phospholipase A2 (PLA2) that inhibits collagen-induced platelet aggregation. PLA2 catalyzes the calcium-dependent hydrolysis of the 2-acyl groups in 3-sn-phosphoglycerides. This chain is Acidic phospholipase A2 S3-24, found in Austrelaps superbus (Lowland copperhead snake).